The chain runs to 269 residues: Ubiquinone/menaquinone biosynthesis C-methyltransferase UbiE (269 aa).

Residues Thr92, Asp113, and 141–142 (NA) contribute to the S-adenosyl-L-methionine site.

Belongs to the class I-like SAM-binding methyltransferase superfamily. MenG/UbiE family.

The catalysed reaction is a 2-demethylmenaquinol + S-adenosyl-L-methionine = a menaquinol + S-adenosyl-L-homocysteine + H(+). It catalyses the reaction a 2-methoxy-6-(all-trans-polyprenyl)benzene-1,4-diol + S-adenosyl-L-methionine = a 5-methoxy-2-methyl-3-(all-trans-polyprenyl)benzene-1,4-diol + S-adenosyl-L-homocysteine + H(+). It participates in quinol/quinone metabolism; menaquinone biosynthesis; menaquinol from 1,4-dihydroxy-2-naphthoate: step 2/2. Its pathway is cofactor biosynthesis; ubiquinone biosynthesis. In terms of biological role, methyltransferase required for the conversion of demethylmenaquinol (DMKH2) to menaquinol (MKH2) and the conversion of 2-polyprenyl-6-methoxy-1,4-benzoquinol (DDMQH2) to 2-polyprenyl-3-methyl-6-methoxy-1,4-benzoquinol (DMQH2). This is Ubiquinone/menaquinone biosynthesis C-methyltransferase UbiE from Brucella suis (strain ATCC 23445 / NCTC 10510).